A 38-amino-acid polypeptide reads, in one-letter code: Large ribosomal subunit protein bL36 (38 aa).

Belongs to the bacterial ribosomal protein bL36 family.

The polypeptide is Large ribosomal subunit protein bL36 (Flavobacterium psychrophilum (strain ATCC 49511 / DSM 21280 / CIP 103535 / JIP02/86)).